A 236-amino-acid chain; its full sequence is tRNA (guanine-N(1)-)-methyltransferase (236 aa).

S-adenosyl-L-methionine is bound by residues Gly110 and 129–134; that span reads LGDFVL.

This sequence belongs to the RNA methyltransferase TrmD family. In terms of assembly, homodimer.

It is found in the cytoplasm. It carries out the reaction guanosine(37) in tRNA + S-adenosyl-L-methionine = N(1)-methylguanosine(37) in tRNA + S-adenosyl-L-homocysteine + H(+). In terms of biological role, specifically methylates guanosine-37 in various tRNAs. The protein is tRNA (guanine-N(1)-)-methyltransferase of Clostridium perfringens (strain SM101 / Type A).